A 196-amino-acid chain; its full sequence is Peroxiredoxin TSA1 (196 aa).

In terms of domain architecture, Thioredoxin spans 3–161 (AQVQKQAPTF…ALRLVEAFQW (159 aa)). Lys14 is covalently cross-linked (Glycyl lysine isopeptide (Lys-Gly) (interchain with G-Cter in ubiquitin)). 45-47 (TFV) lines the substrate pocket. Cys48 (cysteine sulfenic acid (-SOH) intermediate) is an active-site residue. Residue Lys89 forms a Glycyl lysine isopeptide (Lys-Gly) (interchain with G-Cter in ubiquitin) linkage. Arg124 contributes to the substrate binding site. Lys132 is covalently cross-linked (Glycyl lysine isopeptide (Lys-Gly) (interchain with G-Cter in ubiquitin)). Thr174 carries the post-translational modification Phosphothreonine.

It belongs to the peroxiredoxin family. AhpC/Prx1 subfamily. Homodimer; disulfide-linked, upon oxidation. Interacts with YAP1 via transient disulfide linkages. Post-translationally, the enzyme can be inactivated by further oxidation of the cysteine sulfenic acid (C(P)-SOH) to sulphinic acid (C(P)-SO2H) instead of its condensation to a disulfide bond. It can be reactivated by forming a transient disulfide bond with sulfiredoxin SRX1, which reduces the cysteine sulfinic acid in an ATP- and Mg-dependent manner.

Its subcellular location is the cytoplasm. The enzyme catalyses a hydroperoxide + [thioredoxin]-dithiol = an alcohol + [thioredoxin]-disulfide + H2O. Its function is as follows. Thiol-specific peroxidase that catalyzes the reduction of hydrogen peroxide and organic hydroperoxides to water and alcohols, respectively. Plays a role in cell protection against oxidative stress by detoxifying peroxides and as sensor of hydrogen peroxide-mediated signaling events. Protects the cell against the oxidative stress caused by nascent-protein misfolding and aggregation. Relays hydrogen peroxide as a signal to the transcription factor YAP1 by inducing the formation of intramolecular disulfide bonds in YAP1, which causes its nuclear accumulation and activation. Can act alternatively as peroxidase and molecular chaperone. Oxidative stress and heat shock exposure cause a reversible shift of the protein structure from low MW species to high MW complexes, triggering a peroxidase-to-chaperone functional switch. The chaperone function of the protein enhances resistance to heat shock. This is Peroxiredoxin TSA1 from Saccharomyces cerevisiae (strain ATCC 204508 / S288c) (Baker's yeast).